We begin with the raw amino-acid sequence, 161 residues long: Lipoprotein signal peptidase (161 aa).

Helical transmembrane passes span 8–28, 40–60, 67–87, and 91–111; these read LKYF…KYLA, ITSF…SLLS, QMIM…YLII, and ITEK…LGNF. Active-site residues include Asp122 and Asp140. Residues 136 to 156 form a helical membrane-spanning segment; the sequence is FNIADSAITCGVVILIAASLF.

The protein belongs to the peptidase A8 family.

It is found in the cell inner membrane. The catalysed reaction is Release of signal peptides from bacterial membrane prolipoproteins. Hydrolyzes -Xaa-Yaa-Zaa-|-(S,diacylglyceryl)Cys-, in which Xaa is hydrophobic (preferably Leu), and Yaa (Ala or Ser) and Zaa (Gly or Ala) have small, neutral side chains.. The protein operates within protein modification; lipoprotein biosynthesis (signal peptide cleavage). In terms of biological role, this protein specifically catalyzes the removal of signal peptides from prolipoproteins. The sequence is that of Lipoprotein signal peptidase from Francisella tularensis subsp. tularensis (strain FSC 198).